The sequence spans 452 residues: Gamma conglutin 1 (452 aa).

Positions Met1–Leu33 are cleaved as a signal peptide. Residues His61–Asn432 form the Peptidase A1 domain. 5 cysteine pairs are disulfide-bonded: Cys89–Cys179, Cys103–Cys116, Cys108–Cys134, Cys119–Cys129, and Cys353–Cys394. The N-linked (GlcNAc...) asparagine glycan is linked to Asn131.

Belongs to the peptidase A1 family. In terms of assembly, two-subunit monomeric unit made of alpha and beta subunits coupled by disulfide bonds (at pH 4.5 and under non-reducing conditions). Monomeric alpha and beta subunits in reducing conditions. Can also form oligomers including dimer, tetramer and cyclic hexamer (trimer of dimers) (at pH &gt; 5.5). Component of globulins complexes which accumulate in seeds. Interacts with flavonoids (e.g. apigenin glucosides) present in globulins complexes. In terms of processing, glycosylated on alpha chain at Asn-131; identified N-glycans bound are Man(2)(Xyl)(Fuc)GlcNAc(2), Man(3)(Xyl)(Fuc)GlcNAc(2), GlcNAcMan(3)(Xyl)(Fuc)GlcNAc(2) and GlcNAc(2)Man(3)(Xyl)(Fuc)GlcNAc(2). As to expression, expressed in developing seeds and in the young roots and cotyledons of germinating seeds and young seedlings.

It is found in the secreted. The protein localises to the extracellular space. Sulfur-rich seed storage protein that remains undegraded at germination. The uncleaved form exhibits some inhibitory activity against GH11 xylanase from T.longibrachiatum, more at pH 7 than at pH 5.3, but not against GH12 xyloglucan-specific endoglucanase (XEG) from A.aculeatus. Binds to model phospholipid membranes containing dimyristoyl phosphatidylglycerol (DMPG), dioleoyl phosphatidic acid (DOPA) or mixture of dimyristoyl phosphatidylcholine and dimyristoyl phosphatidylglycerol (DMPC:DMPG), or mixture of dioleoyl phosphatidic acid and dioleoyl phosphatidylcholine (DOPC:DOPA). The sequence is that of Gamma conglutin 1 from Lupinus albus (White lupine).